The following is a 657-amino-acid chain: Bifunctional lysine-specific demethylase and histidyl-hydroxylase NO66 (657 aa).

Disordered regions lie at residues 1 to 141 (MQKA…QTSP) and 165 to 198 (KSCPLPSKKDSVTKSPMTVHEAPKVDSATSNSNE). Residues 32-41 (SAKTVDTVTD) show a composition bias toward polar residues. The segment covering 55–71 (AEKERRKYLQARVRAEG) has biased composition (basic and acidic residues). 2 stretches are compositionally biased toward polar residues: residues 73–84 (SASTSSKSNATR) and 132–141 (RSQGLEQTSP). Serine 133 is subject to Phosphoserine. Position 139 is a phosphothreonine (threonine 139). Serine 140 bears the Phosphoserine mark. A JmjC domain is found at 315-454 (NPSTYLLGLR…NLLETLMPIV (140 aa)). Residues histidine 355, aspartate 357, and histidine 420 each contribute to the Fe cation site.

This sequence belongs to the ROX family. NO66 subfamily. It depends on Fe(2+) as a cofactor.

The protein resides in the nucleus. The catalysed reaction is N(6),N(6)-dimethyl-L-lysyl(36)-[histone H3] + 2 2-oxoglutarate + 2 O2 = L-lysyl(36)-[histone H3] + 2 formaldehyde + 2 succinate + 2 CO2. Its function is as follows. Oxygenase that can act as both a histone lysine demethylase and a ribosomal histidine hydroxylase. Specifically demethylates 'Lys-4' (H3K4me) and 'Lys-36' (H3K36me) of histone H3, thereby playing a central role in histone code. The protein is Bifunctional lysine-specific demethylase and histidyl-hydroxylase NO66 of Drosophila erecta (Fruit fly).